Here is a 341-residue protein sequence, read N- to C-terminus: tRNA N6-adenosine threonylcarbamoyltransferase (341 aa).

The Fe cation site is built by His-111 and His-115. Residues 134–138 (LVSGG), Asp-167, Gly-180, and Asn-276 contribute to the substrate site. Asp-304 lines the Fe cation pocket.

Belongs to the KAE1 / TsaD family. Requires Fe(2+) as cofactor.

It is found in the cytoplasm. It carries out the reaction L-threonylcarbamoyladenylate + adenosine(37) in tRNA = N(6)-L-threonylcarbamoyladenosine(37) in tRNA + AMP + H(+). Functionally, required for the formation of a threonylcarbamoyl group on adenosine at position 37 (t(6)A37) in tRNAs that read codons beginning with adenine. Is involved in the transfer of the threonylcarbamoyl moiety of threonylcarbamoyl-AMP (TC-AMP) to the N6 group of A37, together with TsaE and TsaB. TsaD likely plays a direct catalytic role in this reaction. This chain is tRNA N6-adenosine threonylcarbamoyltransferase, found in Pseudomonas fluorescens (strain Pf0-1).